Here is a 517-residue protein sequence, read N- to C-terminus: Ubiquitin carboxyl-terminal hydrolase 30 (517 aa).

Residues 1–35 (MLSSRAEAAMTAADRAIQRFLRTGAAVRYKVMKNW) are Mitochondrial intermembrane-facing. A helical membrane pass occupies residues 36-56 (GVIGGIAAALAAGIYVIWGPI). Topologically, residues 57–517 (TERKKRRKGL…HQSQECKSEE (461 aa)) are cytoplasmic. The region spanning 68–502 (PGLVNLGNTC…SAYLLFYERV (435 aa)) is the USP domain. Catalysis depends on cysteine 77, which acts as the Nucleophile. Glycyl lysine isopeptide (Lys-Gly) (interchain with G-Cter in ubiquitin) cross-links involve residues lysine 235 and lysine 289. The interval 364 to 395 (SQHNPKLNKNPGPTLELQDGPGAPTPVLNQPG) is disordered. Catalysis depends on histidine 452, which acts as the Proton acceptor.

Belongs to the peptidase C19 family. Post-translationally, ubiquitinated by parkin (PRKN) at Lys-235 and Lys-289, leading to its degradation. Expressed in skeletal muscle, pancreas, liver and kidney.

Its subcellular location is the mitochondrion outer membrane. The enzyme catalyses Thiol-dependent hydrolysis of ester, thioester, amide, peptide and isopeptide bonds formed by the C-terminal Gly of ubiquitin (a 76-residue protein attached to proteins as an intracellular targeting signal).. With respect to regulation, inhibited by the diterpenoid derivative 15-oxospiramilactone (S3). Its function is as follows. Deubiquitinating enzyme tethered to the mitochondrial outer membrane that acts as a key inhibitor of mitophagy by counteracting the action of parkin (PRKN): hydrolyzes ubiquitin attached by parkin on target proteins, such as RHOT1/MIRO1 and TOMM20, thereby blocking parkin's ability to drive mitophagy. Preferentially cleaves 'Lys-6'- and 'Lys-11'-linked polyubiquitin chains, 2 types of linkage that participate in mitophagic signaling. Does not cleave efficiently polyubiquitin phosphorylated at 'Ser-65'. Acts as a negative regulator of mitochondrial fusion by mediating deubiquitination of MFN1 and MFN2. The protein is Ubiquitin carboxyl-terminal hydrolase 30 of Homo sapiens (Human).